The chain runs to 277 residues: Protein CMSS1 (277 aa).

Residues 1–14 show a composition bias toward acidic residues; sequence MADDLGNEWWEEPA. The tract at residues 1-91 is disordered; sequence MADDLGNEWW…QHAPTAGTPE (91 aa). Residues 24-34 are compositionally biased toward basic and acidic residues; sequence EEVKESEESKG. Basic residues predominate over residues 35–52; sequence NKKKKIPSGKTQVKRKKE. Positions 53–66 are enriched in basic and acidic residues; it reads VKVSQEAEKEDSAP.

It belongs to the CMS1 family.

This Xenopus laevis (African clawed frog) protein is Protein CMSS1 (cmss1).